The following is a 188-amino-acid chain: Molybdopterin synthase catalytic subunit (188 aa).

Over residues 1 to 10 (MSTSETSSYT) the composition is skewed to polar residues. A disordered region spans residues 1-21 (MSTSETSSYTPDIPSEPVTKT). Residues 123–124 (HR), Lys139, and 146–148 (KLE) contribute to the substrate site.

Belongs to the MoaE family. MOCS2B subfamily. Heterotetramer; composed of 2 small (MOCS2A) and 2 large (MOCS2B) subunits.

It is found in the cytoplasm. The catalysed reaction is 2 [molybdopterin-synthase sulfur-carrier protein]-C-terminal-Gly-aminoethanethioate + cyclic pyranopterin phosphate + H2O = molybdopterin + 2 [molybdopterin-synthase sulfur-carrier protein]-C-terminal Gly-Gly + 2 H(+). Its pathway is cofactor biosynthesis; molybdopterin biosynthesis. Its function is as follows. Catalytic subunit of the molybdopterin synthase complex, a complex that catalyzes the conversion of precursor Z into molybdopterin. Acts by mediating the incorporation of 2 sulfur atoms from thiocarboxylated MOCS2A into precursor Z to generate a dithiolene group. The sequence is that of Molybdopterin synthase catalytic subunit from Phaeosphaeria nodorum (strain SN15 / ATCC MYA-4574 / FGSC 10173) (Glume blotch fungus).